A 75-amino-acid chain; its full sequence is MAYLKKSLFLVLFLGLVSLSICEEEKREEENEEEQEDDDQSEEKRGFLDVITHVGKAVGKAALNAVTEMVNQAEQ.

The signal sequence occupies residues methionine 1–cysteine 22. The propeptide occupies glutamate 23 to glutamate 43. Residues glutamate 24–lysine 44 are disordered. Residues glutamate 30 to serine 41 show a composition bias toward acidic residues.

Expressed by the skin glands.

It localises to the secreted. Functionally, has antimicrobial activity. This is Cruzioseptin-6 from Cruziohyla calcarifer (Splendid leaf frog).